Consider the following 124-residue polypeptide: CD59 glycoprotein (124 aa).

The signal sequence occupies residues 1 to 24; sequence MTSRGVHLLLRLLFLLAVFYSSDS. The UPAR/Ly6 domain maps to 25–101; it reads SLMCYHCLLP…DLCNGPEDDG (77 aa). Disulfide bonds link cysteine 28–cysteine 51, cysteine 31–cysteine 38, cysteine 44–cysteine 64, cysteine 70–cysteine 88, and cysteine 89–cysteine 94. Asparagine 37 carries an N-linked (GlcNAc...) asparagine glycan. The GPI-anchor amidated glycine moiety is linked to residue glycine 101. Residues 102–124 constitute a propeptide, removed in mature form; sequence TALTGRTVLLVAPLLAAARNLCL.

Interacts with T-cell surface antigen CD2. Post-translationally, N- and O-glycosylated.

The protein resides in the cell membrane. It is found in the secreted. Its function is as follows. Potent inhibitor of the complement membrane attack complex (MAC) action, which protects self-cells from damage during complement activation. Acts by binding to the beta-haipins of C8 (C8A and C8B) components of the assembling MAC, forming an intermolecular beta-sheet that prevents incorporation of the multiple copies of C9 required for complete formation of the osmolytic pore. The protein is CD59 glycoprotein of Oryctolagus cuniculus (Rabbit).